The chain runs to 944 residues: Translation factor GUF1 homolog, mitochondrial (944 aa).

Residues 201 to 379 (KNVRNFCILA…IITDIPYPPI (179 aa)) enclose the tr-type G domain. Residues 210–217 (AHIDSGKS), 271–275 (DTPGH), and 325–328 (NKID) each bind GTP.

It belongs to the TRAFAC class translation factor GTPase superfamily. Classic translation factor GTPase family. LepA subfamily.

The protein localises to the mitochondrion inner membrane. The enzyme catalyses GTP + H2O = GDP + phosphate + H(+). In terms of biological role, promotes mitochondrial protein synthesis. May act as a fidelity factor of the translation reaction, by catalyzing a one-codon backward translocation of tRNAs on improperly translocated ribosomes. Binds to mitochondrial ribosomes in a GTP-dependent manner. The protein is Translation factor GUF1 homolog, mitochondrial of Plasmodium yoelii yoelii.